The chain runs to 236 residues: Chaperone protein TorD (236 aa).

The protein belongs to the TorD/DmsD family. TorD subfamily.

The protein localises to the cytoplasm. In terms of biological role, involved in the biogenesis of TorA. Acts on TorA before the insertion of the molybdenum cofactor and, as a result, probably favors a conformation of the apoenzyme that is competent for acquiring the cofactor. The protein is Chaperone protein TorD of Colwellia psychrerythraea (strain 34H / ATCC BAA-681) (Vibrio psychroerythus).